Here is a 532-residue protein sequence, read N- to C-terminus: Membrane protein insertase YidC (532 aa).

Transmembrane regions (helical) follow at residues 6–26, 317–337, 342–362, 411–431, 451–473, and 496–516; these read IVLAIILSLVVFLGWHSFAEY, AIDFGMFSIIAKPLLTALTFF, GNWGVAIIVLTLCIKIVFWPL, GGCLPILLQIPVFIGLYQALL, VWLADLSAADPFYITPLLMGASM, and PIIFTVMFLNFPAGLVIYWLF.

This sequence belongs to the OXA1/ALB3/YidC family. Type 1 subfamily. Interacts with the Sec translocase complex via SecD. Specifically interacts with transmembrane segments of nascent integral membrane proteins during membrane integration.

It localises to the cell membrane. Functionally, required for the insertion and/or proper folding and/or complex formation of integral membrane proteins into the membrane. Involved in integration of membrane proteins that insert both dependently and independently of the Sec translocase complex, as well as at least some lipoproteins. Aids folding of multispanning membrane proteins. The sequence is that of Membrane protein insertase YidC from Lawsonia intracellularis (strain PHE/MN1-00).